The following is a 500-amino-acid chain: L-arabinose isomerase (500 aa).

Glu306, Glu333, His350, and His450 together coordinate Mn(2+).

The protein belongs to the arabinose isomerase family. Homohexamer. The cofactor is Mn(2+).

It carries out the reaction beta-L-arabinopyranose = L-ribulose. It participates in carbohydrate degradation; L-arabinose degradation via L-ribulose; D-xylulose 5-phosphate from L-arabinose (bacterial route): step 1/3. Its function is as follows. Catalyzes the conversion of L-arabinose to L-ribulose. The chain is L-arabinose isomerase from Klebsiella pneumoniae (strain 342).